The primary structure comprises 606 residues: Medium-chain acyl-CoA ligase ACSF2, mitochondrial (606 aa).

The N-terminal 13 residues, 1–13 (MSSKILLTNLRTS), are a transit peptide targeting the mitochondrion. ATP-binding positions include 256–264 (TSGTTGKPK), Asp484, Arg499, and Lys590.

Belongs to the ATP-dependent AMP-binding enzyme family.

The protein localises to the mitochondrion. The enzyme catalyses a medium-chain fatty acid + ATP + CoA = a medium-chain fatty acyl-CoA + AMP + diphosphate. It catalyses the reaction octanoate + ATP + CoA = octanoyl-CoA + AMP + diphosphate. In terms of biological role, acyl-CoA synthases catalyze the initial reaction in fatty acid metabolism, by forming a thioester with CoA. Has some preference toward medium-chain substrates. Plays a role in adipocyte differentiation. The chain is Medium-chain acyl-CoA ligase ACSF2, mitochondrial from Danio rerio (Zebrafish).